The chain runs to 276 residues: uncharacterized protein (276 aa).

15–22 contacts ATP; that stretch reads GKGGVGKS. 4Fe-4S ferredoxin-type domains lie at 68–96 and 92–121; these read EIYEINDDCIRCGKCLDVCQFDAIGDFKI and GDFKINPILCEGCGACELICEFDAIEPIKR. 8 residues coordinate [4Fe-4S] cluster: C76, C79, C82, C86, C101, C104, C107, and C111.

This is an uncharacterized protein from Methanocaldococcus jannaschii (strain ATCC 43067 / DSM 2661 / JAL-1 / JCM 10045 / NBRC 100440) (Methanococcus jannaschii).